The primary structure comprises 1850 residues: Vitellogenin-2 (1850 aa).

Positions 1 to 15 (MRGIILALVLTLVGS) are cleaved as a signal peptide. The region spanning 24–662 (FNSRRSYLYN…SPRTMFPSAI (639 aa)) is the Vitellogenin domain. The N-linked (GlcNAc...) asparagine glycan is linked to Asn604. The segment at 935–984 (DAPLDVTEEPFQTSERASREHFAMQGPDSMPRKQSHSSREDLRRSTGKRA) is disordered. Residue Asn1094 is glycosylated (N-linked (GlcNAc...) asparagine). Disordered stretches follow at residues 1115 to 1313 (GTEP…SSSS) and 1338 to 1362 (EFPK…SHDT). The segment covering 1122-1143 (TSSSSSSASSTATSSSSSSASS) has biased composition (low complexity). Residues 1156–1165 (DQVKQARNKD) are compositionally biased toward basic and acidic residues. Low complexity predominate over residues 1167 to 1266 (SSSSRSSKSS…SRSSSSSSKS (100 aa)). N-linked (GlcNAc...) asparagine glycans are attached at residues Asn1177 and Asn1188. Over residues 1267 to 1277 (SSHHSHSHHSG) the composition is skewed to basic residues. A compositionally biased stretch (low complexity) spans 1278–1291 (HLNGSSSSSSSSRS). Asn1280 carries an N-linked (GlcNAc...) asparagine glycan. Positions 1338 to 1350 (EFPKRKLPGDRAT) are enriched in basic and acidic residues. 3 N-linked (GlcNAc...) asparagine glycosylation sites follow: Asn1417, Asn1597, and Asn1665. Residues 1579-1756 (ARCSVSYNKI…SWILEEAPCR (178 aa)) form the VWFD domain. Cystine bridges form between Cys1581/Cys1719 and Cys1604/Cys1755.

Post-translationally, phosvitin, an egg yolk storage protein, is one of the most highly phosphorylated (10%) proteins in nature. Cathepsin D is responsible for intraoocytic processing of vitellogenin. In terms of processing, may contain intrachain disulfide bonds. As to expression, after incorporation from serum via a specific receptor, it is cleaved into four fragments, heavy and light chain lipovitellins, phosphovitin and YGP40, and YGP40 is released into the yolk plasma before or during compartmentation of lipovitellin-phosvitin complex into the yolk granule.

Functionally, precursor of the major egg-yolk proteins that are sources of nutrients during early development of oviparous organisms. Its function is as follows. Phosvitin is believed to be of importance in sequestering calcium, iron and other cations for the developing embryo. The sequence is that of Vitellogenin-2 (VTG2) from Gallus gallus (Chicken).